The chain runs to 201 residues: LexA repressor (201 aa).

A DNA-binding region (H-T-H motif) is located at residues 28–48 (LREIAAQLGISGTLGVMKHLE). Catalysis depends on for autocatalytic cleavage activity residues Ser120 and Lys157.

The protein belongs to the peptidase S24 family. Homodimer.

The catalysed reaction is Hydrolysis of Ala-|-Gly bond in repressor LexA.. Its function is as follows. Represses a number of genes involved in the response to DNA damage (SOS response), including recA and lexA. In the presence of single-stranded DNA, RecA interacts with LexA causing an autocatalytic cleavage which disrupts the DNA-binding part of LexA, leading to derepression of the SOS regulon and eventually DNA repair. This chain is LexA repressor, found in Citrifermentans bemidjiense (strain ATCC BAA-1014 / DSM 16622 / JCM 12645 / Bem) (Geobacter bemidjiensis).